The chain runs to 421 residues: Zinc finger protein 584 (421 aa).

The KRAB domain occupies 17 to 88; the sequence is VMFEDVTVYF…SWVDVTPVSR (72 aa). Positions 120 to 129 are enriched in basic and acidic residues; it reads QHQDTHSEGK. The interval 120–146 is disordered; it reads QHQDTHSEGKPRRHTEHGAAFPPGSSC. 8 C2H2-type zinc fingers span residues 159-181, 214-236, 242-264, 270-292, 298-320, 326-348, 354-376, and 382-404; these read FKCSDCGKVFLKAFALLDHLITH, HVCNECGKAFSYPSKLRKHQKVH, FKCSDCGKTFNRKDALVLHQRIH, YECSKCGKTFSVLSTLIRHRKVH, YECTECGKFFKYNNSFILHQRVH, FECKQCGKGYVTRSGLYQHWKVH, YECSLCGKTFTTRSYRNRHQQFH, and YECTECGKAFKHSSTLLQHKKVH. The disordered stretch occupies residues 402-421; sequence KVHTPERRQEDRAHGKVVSC. The segment covering 404-415 has biased composition (basic and acidic residues); that stretch reads HTPERRQEDRAH.

The protein belongs to the krueppel C2H2-type zinc-finger protein family.

The protein localises to the nucleus. Functionally, may be involved in transcriptional regulation. The chain is Zinc finger protein 584 (ZNF584) from Homo sapiens (Human).